The following is a 393-amino-acid chain: uncharacterized protein (393 aa).

It belongs to the Gfo/Idh/MocA family.

This is an uncharacterized protein from Bacillus subtilis (strain 168).